The sequence spans 280 residues: L-proline cis-4-hydroxylase (280 aa).

Fe cation contacts are provided by H106, D108, and H154. Residue R164 coordinates 2-oxoglutarate.

Belongs to the L-proline cis-4-/cis-3-hydroxylase family. Requires Fe(2+) as cofactor.

The enzyme catalyses L-proline + 2-oxoglutarate + O2 = cis-4-hydroxy-L-proline + succinate + CO2. With respect to regulation, inhibited by metal ions such as Co(2+), Zn(2+), Cu(2+) or Ni(2+). Is also inhibited by EDTA or diethylpyrocarbonate (DEPC) in vitro. Unlike the procollagen-proline cis-3- and trans-4-hydroxylases from mammals, does not necessarily require L-ascorbate for activity although it does increase the activity of the enzyme. Dioxygenase that catalyzes the 2-oxoglutarate-dependent selective hydroxylation of free L-proline to cis-4-hydroxy-L-proline (cis-4-Hyp). The sequence is that of L-proline cis-4-hydroxylase from Mesorhizobium japonicum (strain LMG 29417 / CECT 9101 / MAFF 303099) (Mesorhizobium loti (strain MAFF 303099)).